Here is a 179-residue protein sequence, read N- to C-terminus: uncharacterized protein (179 aa).

Residues 27–54 are disordered; it reads TAKKSRVQAREARAAVEENKKAQLERDK.

This is an uncharacterized protein from Escherichia coli (strain K12).